We begin with the raw amino-acid sequence, 489 residues long: Rhamnulokinase (489 aa).

Residue 13 to 17 (ASSGR) participates in ATP binding. A disulfide bond links Cys-68 and Cys-222. Substrate-binding positions include Gly-83 and 236–238 (HDT). The active-site Proton acceptor is the Asp-237. Thr-259 is a binding site for ATP. A substrate-binding site is contributed by Asn-296. Gln-304 lines the ATP pocket. The cysteines at positions 353 and 370 are disulfide-linked. Position 402 (Gly-402) interacts with ATP. Cys-413 and Cys-417 are oxidised to a cystine.

This sequence belongs to the rhamnulokinase family. Monomer. Requires Mg(2+) as cofactor.

It catalyses the reaction L-rhamnulose + ATP = L-rhamnulose 1-phosphate + ADP + H(+). Its pathway is carbohydrate degradation; L-rhamnose degradation; glycerone phosphate from L-rhamnose: step 2/3. In terms of biological role, involved in the catabolism of L-rhamnose (6-deoxy-L-mannose). Catalyzes the transfer of the gamma-phosphate group from ATP to the 1-hydroxyl group of L-rhamnulose to yield L-rhamnulose 1-phosphate. The sequence is that of Rhamnulokinase from Escherichia fergusonii (strain ATCC 35469 / DSM 13698 / CCUG 18766 / IAM 14443 / JCM 21226 / LMG 7866 / NBRC 102419 / NCTC 12128 / CDC 0568-73).